The primary structure comprises 360 residues: Abhydrolase domain-containing protein lid-1 (360 aa).

The 131-residue stretch at 73–203 folds into the AB hydrolase-1 domain; sequence AIVFIPGLGA…MSFLGGVAGY (131 aa).

This sequence belongs to the peptidase S33 family. ABHD4/ABHD5 subfamily. In terms of assembly, interacts with atgl-1.

The protein localises to the lipid droplet. In terms of biological role, acts coordinately with atgl-1 within the lipolytic cascade to distribute stored energy to tissues during nutritional deprivation. This is Abhydrolase domain-containing protein lid-1 from Caenorhabditis elegans.